Reading from the N-terminus, the 228-residue chain is D-lyxose/D-mannose isomerase (228 aa).

Histidine 103, histidine 105, glutamate 110, and histidine 171 together coordinate Mn(2+).

Belongs to the D-lyxose ketol-isomerase family. Homodimer. Mn(2+) is required as a cofactor.

The catalysed reaction is D-lyxose = D-xylulose. It catalyses the reaction D-mannose = D-fructose. Functionally, sugar isomerase that catalyzes the reversible isomerization of D-lyxose to D-xylulose, and D-mannose to D-fructose. Shows optimum activity using D-lyxose as substrate, but can also effectively catalyze the isomerization between D-fructose and D-mannose. Shows lower activity with L-gulose, D-talose and L-ribose. This is D-lyxose/D-mannose isomerase from Serratia proteamaculans.